The following is a 243-amino-acid chain: tRNA (guanine-N(1)-)-methyltransferase (243 aa).

Residues Gly110 and 130–135 each bind S-adenosyl-L-methionine; that span reads VGDYVM.

This sequence belongs to the RNA methyltransferase TrmD family. As to quaternary structure, homodimer.

The protein localises to the cytoplasm. The catalysed reaction is guanosine(37) in tRNA + S-adenosyl-L-methionine = N(1)-methylguanosine(37) in tRNA + S-adenosyl-L-homocysteine + H(+). Its function is as follows. Specifically methylates guanosine-37 in various tRNAs. The chain is tRNA (guanine-N(1)-)-methyltransferase from Treponema denticola (strain ATCC 35405 / DSM 14222 / CIP 103919 / JCM 8153 / KCTC 15104).